We begin with the raw amino-acid sequence, 391 residues long: Matrix metalloproteinase-23 (391 aa).

The Cytoplasmic segment spans residues 1 to 19; it reads MGWRACLRPEASGAVQGRW. Positions 1 to 79 are excised as a propeptide; the sequence is MGWRACLRPE…LSMLVTRRRR (79 aa). The helical; Signal-anchor for type II membrane protein transmembrane segment at 20–38 threads the bilayer; that stretch reads LGAVLSGLCLLSALAFLEW. The Lumenal segment spans residues 39–391; that stretch reads LGSPTETAWN…TYSWRVRVRS (353 aa). N-linked (GlcNAc...) asparagine glycans are attached at residues Asn-93 and Asn-149. Position 212 (His-212) interacts with Zn(2+). Residue Glu-213 is part of the active site. Zn(2+) is bound by residues His-216 and His-222. Asn-233 carries an N-linked (GlcNAc...) asparagine glycan. Positions 256–290 constitute a ShKT domain; the sequence is CLDRIFVCTSWARKGFCDVRQRLMKRLCPRSCDFC. Disulfide bonds link Cys-256–Cys-290, Cys-263–Cys-283, and Cys-272–Cys-287. Positions 296–381 constitute an Ig-like C2-type domain; that stretch reads PTVATTTSPT…VVRHRQRVLT (86 aa). N-linked (GlcNAc...) asparagine glycosylation is present at Asn-317. A disulfide bond links Cys-322 and Cys-371.

The protein belongs to the peptidase M10A family. It depends on Zn(2+) as a cofactor. In terms of processing, N-glycosylated. Proteolytic cleavage might yield an active form. As to expression, expressed at the highest levels in ovary and uterus. In ovary expression is strictly confined to granulosa cells of preantral and small antral follicles. Detected also in testis and prostate.

Its subcellular location is the membrane. It localises to the endoplasmic reticulum membrane. Its activity is regulated as follows. Inhibited by TIMP2. Protease. May regulate the surface expression of some potassium channels by retaining them in the endoplasmic reticulum. The polypeptide is Matrix metalloproteinase-23 (Mmp23) (Rattus norvegicus (Rat)).